The sequence spans 879 residues: Alanine--tRNA ligase (879 aa).

The Zn(2+) site is built by H566, H570, C668, and H672.

The protein belongs to the class-II aminoacyl-tRNA synthetase family. Requires Zn(2+) as cofactor.

Its subcellular location is the cytoplasm. The enzyme catalyses tRNA(Ala) + L-alanine + ATP = L-alanyl-tRNA(Ala) + AMP + diphosphate. Functionally, catalyzes the attachment of alanine to tRNA(Ala) in a two-step reaction: alanine is first activated by ATP to form Ala-AMP and then transferred to the acceptor end of tRNA(Ala). Also edits incorrectly charged Ser-tRNA(Ala) and Gly-tRNA(Ala) via its editing domain. This chain is Alanine--tRNA ligase, found in Clostridium beijerinckii (strain ATCC 51743 / NCIMB 8052) (Clostridium acetobutylicum).